A 249-amino-acid polypeptide reads, in one-letter code: Pyridoxine 5'-phosphate synthase (249 aa).

Asn-7 is a binding site for 3-amino-2-oxopropyl phosphate. A 1-deoxy-D-xylulose 5-phosphate-binding site is contributed by 9–10 (DH). Residue Arg-18 participates in 3-amino-2-oxopropyl phosphate binding. His-43 functions as the Proton acceptor in the catalytic mechanism. Residues Arg-45 and His-50 each contribute to the 1-deoxy-D-xylulose 5-phosphate site. Glu-70 acts as the Proton acceptor in catalysis. Thr-100 contributes to the 1-deoxy-D-xylulose 5-phosphate binding site. The active-site Proton donor is His-190. Residues Gly-191 and 212-213 (GH) each bind 3-amino-2-oxopropyl phosphate.

This sequence belongs to the PNP synthase family. Homooctamer; tetramer of dimers.

Its subcellular location is the cytoplasm. It carries out the reaction 3-amino-2-oxopropyl phosphate + 1-deoxy-D-xylulose 5-phosphate = pyridoxine 5'-phosphate + phosphate + 2 H2O + H(+). It participates in cofactor biosynthesis; pyridoxine 5'-phosphate biosynthesis; pyridoxine 5'-phosphate from D-erythrose 4-phosphate: step 5/5. Catalyzes the complicated ring closure reaction between the two acyclic compounds 1-deoxy-D-xylulose-5-phosphate (DXP) and 3-amino-2-oxopropyl phosphate (1-amino-acetone-3-phosphate or AAP) to form pyridoxine 5'-phosphate (PNP) and inorganic phosphate. The sequence is that of Pyridoxine 5'-phosphate synthase from Synechococcus sp. (strain CC9902).